The chain runs to 357 residues: Alanine racemase (357 aa).

The Proton acceptor; specific for D-alanine role is filled by K35. An N6-(pyridoxal phosphate)lysine modification is found at K35. Substrate is bound at residue R131. The Proton acceptor; specific for L-alanine role is filled by Y256. A substrate-binding site is contributed by M304.

Belongs to the alanine racemase family. Pyridoxal 5'-phosphate serves as cofactor.

It catalyses the reaction L-alanine = D-alanine. It functions in the pathway amino-acid biosynthesis; D-alanine biosynthesis; D-alanine from L-alanine: step 1/1. Functionally, catalyzes the interconversion of L-alanine and D-alanine. May also act on other amino acids. The sequence is that of Alanine racemase (alr) from Legionella pneumophila (strain Paris).